The sequence spans 950 residues: Translation initiation factor IF-2 (950 aa).

Disordered stretches follow at residues 57–254 (LAER…AVVI) and 304–328 (DVSRDKRRGRQPGRPISEEQAKSLS). 2 stretches are compositionally biased toward low complexity: residues 101-131 (AEPQYAEPQAEQAYEPEPQAAQPEAGAEPAA) and 139-169 (AAPLAAQAAPSPGAEAAAPAAPQAQPAQPAA). The span at 170-215 (PAAPPAPTAQPSAPPPAAAQPRPPQPSAPSRPPPPGYRPAPPPGAR) shows a compositional bias: pro residues. The segment covering 216–233 (PPVSAAPGAPGQPGAAGQ) has biased composition (low complexity). Residues 449-618 (IRPPVVTVMG…ALQSEVLELK (170 aa)) form the tr-type G domain. The segment at 458 to 465 (GHVDHGKT) is G1. A GTP-binding site is contributed by 458–465 (GHVDHGKT). Residues 483–487 (GITQH) are G2. The segment at 504-507 (DTPG) is G3. GTP contacts are provided by residues 504–508 (DTPGH) and 558–561 (NKVD). The interval 558–561 (NKVD) is G4. The segment at 594–596 (SAR) is G5.

Belongs to the TRAFAC class translation factor GTPase superfamily. Classic translation factor GTPase family. IF-2 subfamily.

The protein resides in the cytoplasm. Its function is as follows. One of the essential components for the initiation of protein synthesis. Protects formylmethionyl-tRNA from spontaneous hydrolysis and promotes its binding to the 30S ribosomal subunits. Also involved in the hydrolysis of GTP during the formation of the 70S ribosomal complex. The polypeptide is Translation initiation factor IF-2 (Anaeromyxobacter dehalogenans (strain 2CP-C)).